Here is a 72-residue protein sequence, read N- to C-terminus: Caerin-regulated peptide (72 aa).

An N-terminal signal peptide occupies residues 1–22; that stretch reads MAFLKKSLLLVLFLGLVSLSIC. Residues 23–43 constitute a propeptide that is removed on maturation; it reads DEEKRENEDEEEQEDDEQSEE. The tract at residues 24–46 is disordered; that stretch reads EEKRENEDEEEQEDDEQSEEKRG. The span at 30–41 shows a compositional bias: acidic residues; the sequence is EDEEEQEDDEQS.

In terms of tissue distribution, expressed by the skin glands.

It is found in the secreted. Has antibacterial activity against Gram-positive bacterium M.luteus NCT C2665 and against Gram-negative bacterium E.coli K12D31. This is Caerin-regulated peptide from Agalychnis callidryas (Red-eyed tree frog).